Here is a 1159-residue protein sequence, read N- to C-terminus: MGDQFDSLMERIRVRQAEMSGEGEVAKENGPVTSKITSVKQEVASPTKVFGSSSKCNDGPSTPVHFHPQEPKETTPNMKENAENSLNSFKDATVNESSSKKTSRFSMLAQEIDEYEYDYQSQYNKPKEAYMKGRSPRMSIGETRPAVLCTPAGAQAMKSPNVAVSSKSAPEIALGMSDFEARRIKFAQPIVNVNYLPNESSIFSGGSGSSVNDQSTVLGGSAEMMNVTTSSLSCGELSMNQHITHENTIINAQSCDNREAILRERQQVSNEEYGPHTFMRKKVPKEASSATSSSSSTTTLTTISGASGSTTSGISNAPQDSASTKTTTNTFTSSYLLTKTSNNNINALVSSSPKPFSKDIGRSMFSPVHFTPKSTSSPKTLSESIFSPSKSAAVEGSIATTRRLQFEEKLKKSSSANVTAPPAPTSAPVPTPRHVAPLAPTVAQQSHLTPNHRHAAQQKKHLFPVVGIVATAPIPVQTQWRGQSNTPVVQGARADEKTAGNEPPVGAGVGKLKNLKSRWEFSSATGTPIHPDATEDSLIATAIKMKESAIPKQLGHRSERKGPSASSLYSQGARSNTASPASKSTRYEQEEEDDVFEAPEFNDGGDVISEDGILQEEEEDTSKFIDNAFGFMEGSGAGTPSPYREPPLQRLEKNRPPAEVIEEETENEDESEPYEPEEEEDDDATTQFPVPERSRKSSSQLAYSVSFYRKIQRDRNEESSTVLAGPVISQISPSAPPMSSSLTSQQKLRQLTTGPANGARIVESAKDAHDRIKRAIQVEEQLVAQSKRAMILARDKPSFRGSREEFEAQWAMLRHVEKHRALLTEYDRLKRDGPRIIDGPRGTITVSQLSVNMARDYVSANIASSKKSDEVFYFAAILRYGEQVDVSKMVTSDGGLNRRGVLEFPVPLMLTGIPPDFRATVEIYGQRSMRESTSHEDKYKLKNSTFKAKTRNTFLGGGSTSSANQSLFVDPAASSSSTSSTTSNFNLLGTFSFDINCPGKHLYNMSHTVYPLEGITQMKVRKQAIDGADITYHGFLSMYQRTGEGLGSWTRYWCALENGEMKFWKQPEDEGTKGYTALMDLSTCCRSEGASVVEDICPFPNSFHIDVWAPKMDTSDPRGIERLRVMLAADTAQDLQTWLSLINSTSKQLCTWRNPIVNQ.

Disordered stretches follow at residues 43–81 (VASP…MKEN), 266–327 (QQVS…TKTT), 409–430 (KLKK…APVP), 549–608 (AIPK…GDVI), and 629–699 (FGFM…KSSS). Over residues 50–60 (FGSSSKCNDGP) the composition is skewed to polar residues. Residues 287–327 (ASSATSSSSSTTTLTTISGASGSTTSGISNAPQDSASTKTT) show a composition bias toward low complexity. The span at 421–430 (PPAPTSAPVP) shows a compositional bias: pro residues. Over residues 564-584 (SASSLYSQGARSNTASPASKS) the composition is skewed to polar residues. A compositionally biased stretch (acidic residues) spans 660–684 (VIEEETENEDESEPYEPEEEEDDDA). The PH domain occupies 1029-1147 (DITYHGFLSM…WLSLINSTSK (119 aa)).

As to expression, strongly expressed in dividing neuroblasts under the ventral epidermal cells during ventral enclosure.

It localises to the cytoplasm. Its subcellular location is the cell cortex. It is found in the cytoskeleton. The protein resides in the spindle. The protein localises to the midbody. It localises to the cleavage furrow. Functionally, required for contractile events in embryos that occur prior to mitosis, such as cortical ruffling and pseudocleavage. Promotes membrane ruffling by organizing cortical patches of septins and myosin II. Not generally required for cytokinesis in mitotic cells. Required for the asymmetric cleavage events that extrude the two polar bodies during oocyte meiosis. Not required for meiotic contractile ring assembly, initiation or closure but is required for the transformation of the contractile ring from a disk above the spindle to a tube around the spindle midzone. Promotes astral microtubule-directed cortical myosin polarization and cleavage furrow ingression. Regulates neuroblast cytokinesis during mid- to late-embryogenesis and is required for ventral enclosure. This is Anillin-like protein 1 (ani-1) from Caenorhabditis elegans.